Reading from the N-terminus, the 718-residue chain is Exostosin-2 (718 aa).

The Cytoplasmic portion of the chain corresponds to 1 to 25 (MCASVKYNIRGPALIPRMKTKHRIY). Residues 26 to 46 (YITLFSIVLLGLIATGMFQFW) form a helical; Signal-anchor for type II membrane protein membrane-spanning segment. The Lumenal portion of the chain corresponds to 47 to 718 (PHSIESSGDW…LKSFPNIGSL (672 aa)). 4 disulfides stabilise this stretch: Cys-85-Cys-90, Cys-96-Cys-151, Cys-286-Cys-300, and Cys-318-Cys-339. N-linked (GlcNAc...) asparagine glycosylation is present at Asn-288. Residues Leu-461, Arg-465, Asn-490, and Asn-517 each coordinate UDP. Arg-465, Asn-490, Asn-517, Arg-522, Asp-538, Asp-539, and Asp-540 together coordinate UDP-N-acetyl-alpha-D-glucosamine. UDP-binding residues include Asp-538 and Asp-539. Residue Asp-540 participates in Mn(2+) binding. A protein contacts are provided by Tyr-582 and Ser-584. An intrachain disulfide couples Cys-626 to Cys-676. UDP-N-acetyl-alpha-D-glucosamine-binding residues include Glu-627 and Asp-628. The N-linked (GlcNAc...) asparagine glycan is linked to Asn-637. Residues Lys-651 and Lys-653 each coordinate a protein. Arg-673 contacts UDP-N-acetyl-alpha-D-glucosamine.

It belongs to the glycosyltransferase 47 family. In terms of assembly, part of the heparan sulfate polymerase, a dimeric complex composed of EXT1 and EXT2. Could also form homooligomeric complexes. Interacts with NDST1. Interacts with GALNT5. The cofactor is Mn(2+). In terms of processing, a soluble form is generated by proteolytic processing. Post-translationally, N-glycosylated at Asn-637.

The protein localises to the golgi apparatus membrane. It is found in the golgi apparatus. Its subcellular location is the cis-Golgi network membrane. The protein resides in the endoplasmic reticulum membrane. It localises to the secreted. It carries out the reaction 3-O-{[(1-&gt;4)-beta-D-GlcA-(1-&gt;4)-alpha-D-GlcNAc](n)-(1-&gt;4)-beta-D-GlcA-(1-&gt;3)-beta-D-Gal-(1-&gt;3)-beta-D-Gal-(1-&gt;4)-beta-D-Xyl}-L-seryl-[protein] + UDP-N-acetyl-alpha-D-glucosamine = 3-O-{alpha-D-GlcNAc-[(1-&gt;4)-beta-D-GlcA-(1-&gt;4)-alpha-D-GlcNAc](n)-(1-&gt;4)-beta-D-GlcA-(1-&gt;3)-beta-D-Gal-(1-&gt;3)-beta-D-Gal-(1-&gt;4)-beta-D-Xyl}-L-seryl-[protein] + UDP + H(+). Its pathway is protein modification; protein glycosylation. In terms of biological role, glycosyltransferase forming with EXT1 the heterodimeric heparan sulfate polymerase which catalyzes the elongation of the heparan sulfate glycan backbone. Glycan backbone extension consists in the alternating transfer of (1-&gt;4)-beta-D-GlcA and (1-&gt;4)-alpha-D-GlcNAc residues from their respective UDP-sugar donors. Both EXT1 and EXT2 are required for the full activity of the polymerase since EXT1 bears the N-acetylglucosaminyl-proteoglycan 4-beta-glucuronosyltransferase activity within the complex while EXT2 carries the glucuronosyl-N-acetylglucosaminyl-proteoglycan 4-alpha-N-acetylglucosaminyltransferase activity. Heparan sulfate proteoglycans are ubiquitous components of the extracellular matrix and play an important role in tissue homeostasis and signaling. This Bos taurus (Bovine) protein is Exostosin-2.